The following is a 348-amino-acid chain: Sec-independent protein translocase protein TatC (348 aa).

The next 6 helical transmembrane spans lie at leucine 7–leucine 27, valine 162–leucine 182, cysteine 192–leucine 212, methionine 244–leucine 264, tyrosine 278–threonine 298, and methionine 299–methionine 319.

Belongs to the TatC family. As to quaternary structure, forms a complex with TatA.

Its subcellular location is the cell membrane. Its function is as follows. Part of the twin-arginine translocation (Tat) system that transports large folded proteins containing a characteristic twin-arginine motif in their signal peptide across membranes. The chain is Sec-independent protein translocase protein TatC from Akkermansia muciniphila (strain ATCC BAA-835 / DSM 22959 / JCM 33894 / BCRC 81048 / CCUG 64013 / CIP 107961 / Muc).